The sequence spans 371 residues: Undecaprenyl-diphosphatase 1 (371 aa).

3 helical membrane passes run 53-73, 100-120, and 126-146; these read PYLAFIVAVHVATAAALIVAF, LAWLIILGTVPVGIVGLLLEH, and LGRPLPAAVFLTVNGMIMLLG. The segment at 152–226 is disordered; the sequence is RSTTRGAPGP…PEAEDVTLPE (75 aa). 3 helical membrane-spanning segments follow: residues 291–311, 322–342, and 351–371; these read FAFLLATPVILAAGLLKLPDL, QTLFGAIVAGVVAYVSIRFLA, and TPFAVYCLVAGALCVVRFGIF.

This sequence belongs to the UppP family.

It localises to the cell membrane. The catalysed reaction is di-trans,octa-cis-undecaprenyl diphosphate + H2O = di-trans,octa-cis-undecaprenyl phosphate + phosphate + H(+). Its function is as follows. Catalyzes the dephosphorylation of undecaprenyl diphosphate (UPP). Confers resistance to bacitracin. This chain is Undecaprenyl-diphosphatase 1, found in Frankia casuarinae (strain DSM 45818 / CECT 9043 / HFP020203 / CcI3).